The primary structure comprises 426 residues: NADH-quinone oxidoreductase subunit H 1 (426 aa).

10 helical membrane passes run 22-42 (LWAT…VMLM), 91-111 (FLFW…YLVI), 124-144 (IGVL…VMAG), 163-183 (MVSY…MTSL), 206-226 (FIFK…IAMV), 258-278 (LFFL…VTLW), 299-319 (FSVF…IGWV), 331-351 (AIGL…LLIP), 357-377 (VSDI…YIWY), and 392-412 (IGWK…AVLG).

The protein belongs to the complex I subunit 1 family. NDH-1 is composed of 14 different subunits. Subunits NuoA, H, J, K, L, M, N constitute the membrane sector of the complex.

The protein localises to the cell inner membrane. The catalysed reaction is a quinone + NADH + 5 H(+)(in) = a quinol + NAD(+) + 4 H(+)(out). Its function is as follows. NDH-1 shuttles electrons from NADH, via FMN and iron-sulfur (Fe-S) centers, to quinones in the respiratory chain. The immediate electron acceptor for the enzyme in this species is believed to be ubiquinone. Couples the redox reaction to proton translocation (for every two electrons transferred, four hydrogen ions are translocated across the cytoplasmic membrane), and thus conserves the redox energy in a proton gradient. This subunit may bind ubiquinone. The protein is NADH-quinone oxidoreductase subunit H 1 of Koribacter versatilis (strain Ellin345).